Here is a 355-residue protein sequence, read N- to C-terminus: Peptide chain release factor 1 (355 aa).

N5-methylglutamine is present on glutamine 231. The span at 280–291 (SERLAKESEARK) shows a compositional bias: basic and acidic residues. Residues 280-303 (SERLAKESEARKSQVGSGDRSERI) are disordered.

This sequence belongs to the prokaryotic/mitochondrial release factor family. Methylated by PrmC. Methylation increases the termination efficiency of RF1.

The protein resides in the cytoplasm. Its function is as follows. Peptide chain release factor 1 directs the termination of translation in response to the peptide chain termination codons UAG and UAA. The polypeptide is Peptide chain release factor 1 (Campylobacter jejuni subsp. jejuni serotype O:2 (strain ATCC 700819 / NCTC 11168)).